Reading from the N-terminus, the 147-residue chain is Large ribosomal subunit protein bL9 (147 aa).

It belongs to the bacterial ribosomal protein bL9 family.

Binds to the 23S rRNA. In Nitratiruptor sp. (strain SB155-2), this protein is Large ribosomal subunit protein bL9.